We begin with the raw amino-acid sequence, 264 residues long: Thiazole synthase (264 aa).

Lys-106 (schiff-base intermediate with DXP) is an active-site residue. Residues Gly-167, 193–194 (AG), and 215–216 (NT) each bind 1-deoxy-D-xylulose 5-phosphate.

The protein belongs to the ThiG family. In terms of assembly, homotetramer. Forms heterodimers with either ThiH or ThiS.

The protein localises to the cytoplasm. It carries out the reaction [ThiS sulfur-carrier protein]-C-terminal-Gly-aminoethanethioate + 2-iminoacetate + 1-deoxy-D-xylulose 5-phosphate = [ThiS sulfur-carrier protein]-C-terminal Gly-Gly + 2-[(2R,5Z)-2-carboxy-4-methylthiazol-5(2H)-ylidene]ethyl phosphate + 2 H2O + H(+). Its pathway is cofactor biosynthesis; thiamine diphosphate biosynthesis. Functionally, catalyzes the rearrangement of 1-deoxy-D-xylulose 5-phosphate (DXP) to produce the thiazole phosphate moiety of thiamine. Sulfur is provided by the thiocarboxylate moiety of the carrier protein ThiS. In vitro, sulfur can be provided by H(2)S. The protein is Thiazole synthase of Stenotrophomonas maltophilia (strain R551-3).